Consider the following 299-residue polypeptide: MERQLEAYCAHLRNERQVSGHTLLAYRRDLEKVIEFCNNQGIAGWDALQVQQLRQLVARQHHHGQSSRSLARLLSAVRGLYRYLNREGLCQHDPANGLAPPKGERRLPKTLDTDRALQLLDGGVDDDFIARRDQAILELFYSSGLRLSELAGLDLEHLDLTGGLVQVLGKGGKSRVLPVGRKACEALQEWFRLRGIAAPRDGAVFITRQGNRLSTRAIQMRVKTFGERELGQHLHPHMLRHSFASHLLESSQDLRAVQEMLGHADISTTQIYTHLDFQHLAAVYDSAHPRAKRSKGNES.

Residues 1–85 (MERQLEAYCA…AVRGLYRYLN (85 aa)) form the Core-binding (CB) domain. A Tyr recombinase domain is found at 106–285 (RLPKTLDTDR…DFQHLAAVYD (180 aa)). Active-site residues include arginine 146, lysine 170, histidine 237, arginine 240, and histidine 263. Tyrosine 272 acts as the O-(3'-phospho-DNA)-tyrosine intermediate in catalysis.

The protein belongs to the 'phage' integrase family. XerC subfamily. As to quaternary structure, forms a cyclic heterotetrameric complex composed of two molecules of XerC and two molecules of XerD.

It is found in the cytoplasm. Functionally, site-specific tyrosine recombinase, which acts by catalyzing the cutting and rejoining of the recombining DNA molecules. The XerC-XerD complex is essential to convert dimers of the bacterial chromosome into monomers to permit their segregation at cell division. It also contributes to the segregational stability of plasmids. The chain is Tyrosine recombinase XerC from Pseudomonas entomophila (strain L48).